A 1085-amino-acid polypeptide reads, in one-letter code: Protein IFH1 (1085 aa).

Disordered regions lie at residues 1 to 251 (MAGK…QQAL), 283 to 302 (KNKE…VMLG), 457 to 493 (SKLK…TSNV), 507 to 622 (DDEN…DSSV), 676 to 700 (VDDE…IGSK), and 747 to 774 (QLRE…GDEL). Composition is skewed to polar residues over residues 9 to 18 (KSTINHSTHS) and 39 to 48 (RQSPPTLSTT). The span at 54–66 (SLIYSSESSLSDV) shows a compositional bias: low complexity. Basic residues predominate over residues 76–85 (NPHKIKRKAK). Residues 120–165 (DGEESENEEEESEEEEEDDDEDDDDDDDDGSDSDSDSETSSDDENI) show a composition bias toward acidic residues. A compositionally biased stretch (polar residues) spans 184–197 (AMNTNSNTLYSSRE). Ser-208 is subject to Phosphoserine. Over residues 209–239 (PKKENEEEQKEEKEKEKEEQQKQQESNKKEV) the composition is skewed to basic and acidic residues. Positions 241–251 (GSGTTTTQQAL) are enriched in polar residues. Basic and acidic residues predominate over residues 283-297 (KNKENNGNEEDKLDS). Residues 474–483 (QRRKLYKKTQ) show a composition bias toward basic residues. Over residues 484–493 (KPSTRTTSNV) the composition is skewed to polar residues. The span at 513-524 (HKSKKGRHKSGK) shows a compositional bias: basic residues. Over residues 546 to 557 (STHSTVLNSGKY) the composition is skewed to polar residues. Positions 584–599 (ETSHDADTDEELRALD) are enriched in basic and acidic residues. 2 stretches are compositionally biased toward acidic residues: residues 607–620 (TELD…DDDS) and 676–686 (VDDESTDEDDN). Residues 747 to 764 (QLREQHQRAQTPDVKREG) show a composition bias toward basic and acidic residues. Position 1041 is a phosphoserine (Ser-1041).

This sequence belongs to the IFH1 family.

It localises to the nucleus. Transcriptional coactivator that together with FHL1 regulates the expression of rRNA and ribosomal protein genes. Its activity is negatively regulated by environmental stress. In Saccharomyces cerevisiae (strain ATCC 204508 / S288c) (Baker's yeast), this protein is Protein IFH1 (IFH1).